Here is a 285-residue protein sequence, read N- to C-terminus: Methylamine utilization protein MauF (285 aa).

A run of 7 helical transmembrane segments spans residues 39 to 59 (LGGL…LSQT), 63 to 83 (GVAV…LSTW), 120 to 140 (AVGA…LGFG), 144 to 164 (FGAL…QLGF), 184 to 204 (FPVW…YLTY), 209 to 229 (ILYL…AILL), and 265 to 285 (ALLD…FAAL).

The protein resides in the cell membrane. The protein operates within one-carbon metabolism; methylamine degradation. In Methylorubrum extorquens (strain ATCC 14718 / DSM 1338 / JCM 2805 / NCIMB 9133 / AM1) (Methylobacterium extorquens), this protein is Methylamine utilization protein MauF (mauF).